Here is a 427-residue protein sequence, read N- to C-terminus: Glucose-6-phosphate isomerase (427 aa).

The active-site Proton donor is Glu-277. Active-site residues include His-298 and Lys-414.

Belongs to the GPI family.

Its subcellular location is the cytoplasm. It carries out the reaction alpha-D-glucose 6-phosphate = beta-D-fructose 6-phosphate. It functions in the pathway carbohydrate biosynthesis; gluconeogenesis. Its pathway is carbohydrate degradation; glycolysis; D-glyceraldehyde 3-phosphate and glycerone phosphate from D-glucose: step 2/4. Functionally, catalyzes the reversible isomerization of glucose-6-phosphate to fructose-6-phosphate. This chain is Glucose-6-phosphate isomerase, found in Mycoplasma mycoides subsp. mycoides SC (strain CCUG 32753 / NCTC 10114 / PG1).